A 139-amino-acid chain; its full sequence is Putative nickel-responsive regulator (139 aa).

4 residues coordinate Ni(2+): His-79, His-90, His-92, and Cys-98.

Belongs to the transcriptional regulatory CopG/NikR family. Ni(2+) serves as cofactor.

Functionally, transcriptional regulator. The chain is Putative nickel-responsive regulator from Geobacter sulfurreducens (strain ATCC 51573 / DSM 12127 / PCA).